A 418-amino-acid polypeptide reads, in one-letter code: 3-isopropylmalate dehydratase large subunit 1 (418 aa).

[4Fe-4S] cluster is bound by residues Cys298, Cys358, and Cys361.

This sequence belongs to the aconitase/IPM isomerase family. LeuC type 2 subfamily. Heterodimer of LeuC and LeuD. [4Fe-4S] cluster serves as cofactor.

The enzyme catalyses (2R,3S)-3-isopropylmalate = (2S)-2-isopropylmalate. It participates in amino-acid biosynthesis; L-leucine biosynthesis; L-leucine from 3-methyl-2-oxobutanoate: step 2/4. Catalyzes the isomerization between 2-isopropylmalate and 3-isopropylmalate, via the formation of 2-isopropylmaleate. The polypeptide is 3-isopropylmalate dehydratase large subunit 1 (Archaeoglobus fulgidus (strain ATCC 49558 / DSM 4304 / JCM 9628 / NBRC 100126 / VC-16)).